The primary structure comprises 205 residues: Translation initiation factor 2 subunit beta (205 aa).

The TRAM domain maps to 145-203 (GIEIGKEYTVTIESTGSAGEGIARYQGYTIYVPKAKKGERVKIIIRKIKRNVAIAELAD).

It belongs to the eIF-2-beta/eIF-5 family. Heterotrimer composed of an alpha, a beta and a gamma chain.

Functionally, eIF-2 functions in the early steps of protein synthesis by forming a ternary complex with GTP and initiator tRNA. In Picrophilus torridus (strain ATCC 700027 / DSM 9790 / JCM 10055 / NBRC 100828 / KAW 2/3), this protein is Translation initiation factor 2 subunit beta.